Consider the following 701-residue polypeptide: Polyribonucleotide nucleotidyltransferase (701 aa).

Residues Asp-487 and Asp-493 each coordinate Mg(2+). In terms of domain architecture, KH spans 554 to 613 (PTMLQMKIDSDKIRDVIGKGGATIRGICEETKASIDIEDDGSVKIYGETKEAAEAAKLRV). The S1 motif domain occupies 623–691 (GKIYVGKVER…NRGRIKLSIK (69 aa)).

This sequence belongs to the polyribonucleotide nucleotidyltransferase family. Component of the RNA degradosome, which is a multiprotein complex involved in RNA processing and mRNA degradation. Requires Mg(2+) as cofactor.

Its subcellular location is the cytoplasm. It carries out the reaction RNA(n+1) + phosphate = RNA(n) + a ribonucleoside 5'-diphosphate. Its function is as follows. Involved in mRNA degradation. Catalyzes the phosphorolysis of single-stranded polyribonucleotides processively in the 3'- to 5'-direction. This is Polyribonucleotide nucleotidyltransferase from Pseudomonas aeruginosa (strain LESB58).